Here is a 1744-residue protein sequence, read N- to C-terminus: Complement C4-A (1744 aa).

Positions 1–19 (MRLLWGLIWASSFFTLSLQ) are cleaved as a signal peptide. A disulfide bond links C68 and C97. The N-linked (GlcNAc...) asparagine glycan is linked to N226. Residues C635 and C669 are joined by a disulfide bond. The propeptide occupies 676–679 (RKKR). 3 disulfide bridges follow: C702–C728, C703–C735, and C716–C736. The 35-residue stretch at 702 to 736 (CCQDGVTRLPMMRSCEQRAARVQQPDCREPFLSCC) folds into the Anaphylatoxin-like domain. A glycan (N-linked (GlcNAc...) asparagine) is linked at N862. Phosphoserine; by FAM20C is present on S918. Positions 1010–1013 (CGEQ) form a cross-link, isoglutamyl cysteine thioester (Cys-Gln). An O-linked (GalNAc...) threonine glycan is attached at T1244. N-linked (GlcNAc...) (complex) asparagine glycosylation occurs at N1328. An N-linked (GlcNAc...) asparagine glycan is attached at N1391. Residues Y1417, Y1420, and Y1422 each carry the sulfotyrosine modification. The propeptide occupies 1447–1453 (RRNRRRR). Disulfide bonds link C1471–C1535, C1583–C1588, C1595–C1673, C1618–C1742, and C1718–C1727. Positions 1595–1742 (CPRQRRALER…FLQEYGTQGC (148 aa)) constitute an NTR domain.

In terms of assembly, complement circulates in blood as a disulfide-linked trimer of an alpha, beta and gamma chain. Complement C4b is composed of complement C4b-A, complement C4 beta and complement C4 gamma chains that are associated via disulfide bonds. Non-enzymatic component of the C3 convertase, also named C4bC2b, composed of the serine protease complement C2b (C2), as well as complement C4b. Non-enzymatic component of the C5 convertase, also named C4bC2bC3b, composed of the serine protease complement C2b (C2), complement C3b, as well as complement C4b. Post-translationally, prior to secretion, the single-chain precursor is enzymatically cleaved by plasminogen (PLG) to yield non-identical chains alpha, beta and gamma. During activation of the complement systems, the alpha chain is cleaved into C4a and C4b by different proteases depending on the complement pathway: C4b stays linked to the beta and gamma chains, while C4a is released in the plasma. The alpha chain is cleaved by C1S to generate C4a and C4b following activation by the classical complement system. The alpha chain is cleaved to generate C4a and C4b by MASP2 following activation by the lectin complement system. The alpha chain is cleaved by GZMK to generate C4a and C4b following activation by the GZMK complement system. Further degradation of C4b by C1 into the inactive fragments C4c and C4d blocks the generation of C3 convertase. The proteolytic cleavages often are incomplete so that many structural forms can be found in plasma. In terms of processing, upon activation, the internal thioester bond reacts with carbohydrate antigens on the target surface to form amide or ester bonds, leading to covalent association with the surface of pathogens. Ser-1236 of complement C4b interacts with complement C3b via a thioester linkage. Post-translationally, N- and O-glycosylated. O-glycosylated with a core 1 or possibly core 8 glycan. In terms of tissue distribution, complement component C4 is expressed at highest levels in the liver, at moderate levels in the adrenal cortex, adrenal medulla, thyroid gland, and the kidney, and at lowest levels in the heart, ovary, small intestine, thymus, pancreas and spleen. The extra-hepatic sites of expression may be important for the local protection and inflammatory response.

The protein resides in the secreted. It localises to the synapse. It is found in the cell projection. The protein localises to the axon. Its subcellular location is the dendrite. The protein resides in the cell surface. With respect to regulation, specifically inhibited by nanobody hC4Nb8, inhibiting the classical complement pathway. Specifically inhibited by NbB5, NbE11 and NbH9 nanobodies, and to a lesser extent by NbH11 and NbE3 nanobodies. Functionally, precursor of non-enzymatic components of the classical, lectin and GZMK complement pathways, which consist in a cascade of proteins that leads to phagocytosis and breakdown of pathogens and signaling that strengthens the adaptive immune system. In terms of biological role, non-enzymatic component of C3 and C5 convertases. Generated following cleavage by complement proteases (C1S, MASP2 or GZMK, depending on the complement pathway), it covalently attaches to the surface of pathogens, where it acts as an opsonin that marks the surface of antigens for removal. It then recruits the serine protease complement C2b to form the C3 and C5 convertases, which cleave and activate C3 and C5, respectively, the next components of the complement pathways. Complement C4b-A isotype is responsible for effective binding to form amide bonds with immune aggregates or protein antigens, while complement C4b-B isotype catalyzes the transacylation of the thioester carbonyl group to form ester bonds with carbohydrate antigens. Putative humoral mediator released following cleavage by complement proteases (C1S, MASP2 or GZMK, depending on the complement pathway). While it is strongly similar to anaphylatoxins, its role is unclear. Was reported to act as a mediator of local inflammatory process; however these effects were probably due to contamination with C3a and/C5a anaphylatoxins in biological assays. In Homo sapiens (Human), this protein is Complement C4-A.